The sequence spans 218 residues: tRNA (guanine-N(7)-)-methyltransferase (218 aa).

The disordered stretch occupies residues methionine 1–proline 26. Residues valine 13–proline 26 show a composition bias toward basic and acidic residues. S-adenosyl-L-methionine contacts are provided by glutamate 45, glutamate 70, aspartate 97, and aspartate 119. Aspartate 119 is a catalytic residue. Lysine 123 serves as a coordination point for substrate. The interval arginine 125–arginine 130 is interaction with RNA. Substrate-binding positions include aspartate 155 and threonine 195–glutamate 198.

Belongs to the class I-like SAM-binding methyltransferase superfamily. TrmB family.

It catalyses the reaction guanosine(46) in tRNA + S-adenosyl-L-methionine = N(7)-methylguanosine(46) in tRNA + S-adenosyl-L-homocysteine. The protein operates within tRNA modification; N(7)-methylguanine-tRNA biosynthesis. In terms of biological role, catalyzes the formation of N(7)-methylguanine at position 46 (m7G46) in tRNA. This Lactobacillus delbrueckii subsp. bulgaricus (strain ATCC 11842 / DSM 20081 / BCRC 10696 / JCM 1002 / NBRC 13953 / NCIMB 11778 / NCTC 12712 / WDCM 00102 / Lb 14) protein is tRNA (guanine-N(7)-)-methyltransferase.